The sequence spans 230 residues: MRKAGLWGLLCVFFVSEVKAAIVLEEERYDLVEGQTLTVKCPFNIMKYANSQKAWQRLPDGKEPLTLVVTQRPFTRPSEVHMGKFTLKHDPSEAMLQVQMTDLQVTDSGLYRCVIYHPPNDPVVLFHPVRLVVTKGSSDVFTPVIIPITRLTERPILITTKYSPSDTTTTRSLPKPTAVVSSPGLGVTIINGTDADSVSTSSVTISVICGLLSKSLVFIILFIVTKRTFG.

The first 20 residues, 1-20, serve as a signal peptide directing secretion; that stretch reads MRKAGLWGLLCVFFVSEVKA. One can recognise an Ig-like V-type domain in the interval 21–124; it reads AIVLEEERYD…IYHPPNDPVV (104 aa). Residues 21–202 are Extracellular-facing; the sequence is AIVLEEERYD…TDADSVSTSS (182 aa). Cys-41 and Cys-113 are disulfide-bonded. A glycan (N-linked (GlcNAc...) asparagine) is linked at Asn-191. A helical membrane pass occupies residues 203 to 223; it reads VTISVICGLLSKSLVFIILFI. The Cytoplasmic portion of the chain corresponds to 224 to 230; sequence VTKRTFG.

Monomer. Homomultimer; when activated. Interacts with TYROBP/DAP12. Interacts with TLR4.

The protein resides in the cell membrane. Functionally, cell surface receptor that plays important roles in innate and adaptive immunity by amplifying inflammatory responses. Upon activation by various ligands such as PGLYRP1, HMGB1 or HSP70, multimerizes and forms a complex with transmembrane adapter TYROBP/DAP12. In turn, initiates a SYK-mediated cascade of tyrosine phosphorylation, activating multiple downstream mediators such as BTK, MAPK1, MAPK3 or phospholipase C-gamma. This cascade promotes the neutrophil- and macrophage-mediated release of pro-inflammatory cytokines and/or chemokines, as well as their migration and thereby amplifies inflammatory responses that are triggered by bacterial and fungal infections. By also promoting the amplification of inflammatory signals that are initially triggered by Toll-like receptor (TLR) and NOD-like receptor engagement, plays a major role in the pathophysiology of acute and chronic inflammatory diseases of different etiologies including septic shock and atherosclerosis. In Mus musculus (Mouse), this protein is Triggering receptor expressed on myeloid cells 1 (Trem1).